The sequence spans 222 residues: uncharacterized protein (222 aa).

Helical transmembrane passes span 25 to 45 (LLWLFFTLLGLGVFGIMPATA), 80 to 100 (LLGAVLALIGVIIYIDLALIY), 111 to 131 (FAIMIFGFLFVSMLFYVFPLL), and 160 to 180 (LALTVALFFLLAYLPGIVPFF).

It localises to the cell membrane. This is an uncharacterized protein from Bacillus subtilis (strain 168).